Consider the following 409-residue polypeptide: MSPCENDTPINWKRNLIVAWLGCFLTGAAFSLVMPFLPLYVEQLGVTGHSALNMWSGIVFSITFLFSAIASPFWGGLADRKGRKLMLLRSALGMGIVMVLMGLAQNIWQFLILRALLGLLGGFVPNANALIATQVPRNKSGWALGTLSTGGVSGALLGPMAGGLLADSYGLRPVFFITASVLILCFFVTLFCIREKFQPVSKKEMLHMREVVTSLKNPKLVLSLFVTTLIIQVATGSIAPILTLYVRELAGNVSNVAFISGMIASVPGVAALLLSAPRLGKLGDRIGPEKILITALIFSVLLLIPMSYVQTPLQLGILRFLLGAADGALLPAVQTLLVYNSSNQIAGRIFSYNQSFRDIGNVTGPLMGAAISANYGFRAVFLVTAGVVLFNAVYSWNSLRRRRIPQVSN.

Transmembrane regions (helical) follow at residues 16–36, 58–78, 92–112, 115–135, 146–166, 173–193, 224–244, 256–276, 291–311, and 379–399; these read LIVA…VMPF, IVFS…GGLA, LGMG…QFLI, ALLG…ATQV, TLST…GLLA, PVFF…LFCI, LFVT…ILTL, VAFI…LLSA, ILIT…YVQT, and AVFL…WNSL.

This sequence belongs to the major facilitator superfamily. DHA1 family. MdtG (TC 2.A.1.2.20) subfamily.

It localises to the cell inner membrane. Confers resistance to fosfomycin and deoxycholate. This Escherichia coli O9:H4 (strain HS) protein is Multidrug resistance protein MdtG.